Consider the following 210-residue polypeptide: Large ribosomal subunit protein bL25 (210 aa).

Residues 185 to 210 are disordered; it reads APEPAGQPEVPPEPAEEAKAKTIEKE. Basic and acidic residues predominate over residues 200–210; it reads EEAKAKTIEKE.

This sequence belongs to the bacterial ribosomal protein bL25 family. CTC subfamily. As to quaternary structure, part of the 50S ribosomal subunit; part of the 5S rRNA/L5/L18/L25 subcomplex. Contacts the 5S rRNA. Binds to the 5S rRNA independently of L5 and L18.

In terms of biological role, this is one of the proteins that binds to the 5S RNA in the ribosome where it forms part of the central protuberance. This is Large ribosomal subunit protein bL25 from Desulforamulus reducens (strain ATCC BAA-1160 / DSM 100696 / MI-1) (Desulfotomaculum reducens).